We begin with the raw amino-acid sequence, 371 residues long: Histidinol-phosphate aminotransferase 2 (371 aa).

Lysine 232 carries the post-translational modification N6-(pyridoxal phosphate)lysine.

This sequence belongs to the class-II pyridoxal-phosphate-dependent aminotransferase family. Histidinol-phosphate aminotransferase subfamily. As to quaternary structure, homodimer. Requires pyridoxal 5'-phosphate as cofactor.

The enzyme catalyses L-histidinol phosphate + 2-oxoglutarate = 3-(imidazol-4-yl)-2-oxopropyl phosphate + L-glutamate. It functions in the pathway amino-acid biosynthesis; L-histidine biosynthesis; L-histidine from 5-phospho-alpha-D-ribose 1-diphosphate: step 7/9. The chain is Histidinol-phosphate aminotransferase 2 from Methylococcus capsulatus (strain ATCC 33009 / NCIMB 11132 / Bath).